The chain runs to 234 residues: Phosphoribosylaminoimidazole-succinocarboxamide synthase (234 aa).

This sequence belongs to the SAICAR synthetase family.

The enzyme catalyses 5-amino-1-(5-phospho-D-ribosyl)imidazole-4-carboxylate + L-aspartate + ATP = (2S)-2-[5-amino-1-(5-phospho-beta-D-ribosyl)imidazole-4-carboxamido]succinate + ADP + phosphate + 2 H(+). Its pathway is purine metabolism; IMP biosynthesis via de novo pathway; 5-amino-1-(5-phospho-D-ribosyl)imidazole-4-carboxamide from 5-amino-1-(5-phospho-D-ribosyl)imidazole-4-carboxylate: step 1/2. The protein is Phosphoribosylaminoimidazole-succinocarboxamide synthase of Clostridium botulinum (strain Langeland / NCTC 10281 / Type F).